We begin with the raw amino-acid sequence, 234 residues long: tRNA1(Val) (adenine(37)-N6)-methyltransferase (234 aa).

Belongs to the methyltransferase superfamily. tRNA (adenine-N(6)-)-methyltransferase family.

It localises to the cytoplasm. The catalysed reaction is adenosine(37) in tRNA1(Val) + S-adenosyl-L-methionine = N(6)-methyladenosine(37) in tRNA1(Val) + S-adenosyl-L-homocysteine + H(+). Its function is as follows. Specifically methylates the adenine in position 37 of tRNA(1)(Val) (anticodon cmo5UAC). The protein is tRNA1(Val) (adenine(37)-N6)-methyltransferase of Phocaeicola vulgatus (strain ATCC 8482 / DSM 1447 / JCM 5826 / CCUG 4940 / NBRC 14291 / NCTC 11154) (Bacteroides vulgatus).